The chain runs to 732 residues: Probable zinc transporter cis4 (732 aa).

12 helical membrane passes run 52–72 (ETLG…GLEV), 79–99 (FYLI…LGIY), 111–131 (VIIA…LGTL), 163–183 (YIAF…LGYF), 189–209 (VFYA…FYLV), 219–239 (LAFL…VLPL), 240–260 (GTIN…IFCI), 268–288 (IQFY…SAII), 350–370 (IFYF…YGLW), 380–400 (AIHM…TTLA), 415–435 (IEAL…FSIV), and 453–473 (LLLV…AFNH). The segment at 526 to 547 (HVSQHEHTHENSQEHHHEHNHN) is disordered. A run of 2 helical transmembrane segments spans residues 586 to 606 (IFLH…STIL) and 615 to 635 (FDPL…LPLI).

This sequence belongs to the cation diffusion facilitator (CDF) transporter (TC 2.A.4) family. SLC30A subfamily. Interacts with zrg17.

Its subcellular location is the endoplasmic reticulum membrane. It is found in the golgi apparatus. The protein localises to the cis-Golgi network membrane. Probable zinc transporter involved in Golgi membrane trafficking through the regulation of zinc homeostasis. In Schizosaccharomyces pombe (strain 972 / ATCC 24843) (Fission yeast), this protein is Probable zinc transporter cis4 (cis4).